Here is a 111-residue protein sequence, read N- to C-terminus: Cytochrome b-c1 complex subunit 7 (111 aa).

At Ala2 the chain carries N-acetylalanine. At Lys12 the chain carries N6-acetyllysine; alternate. Lys12 carries the post-translational modification N6-succinyllysine; alternate. Lys19 carries the N6-acetyllysine modification. An N6-acetyllysine; alternate modification is found at Lys78. Lys78 carries the post-translational modification N6-succinyllysine; alternate. N6-acetyllysine is present on residues Lys83 and Lys96.

It belongs to the UQCRB/QCR7 family. Component of the ubiquinol-cytochrome c oxidoreductase (cytochrome b-c1 complex, complex III, CIII), a multisubunit enzyme composed of 11 subunits. The complex is composed of 3 respiratory subunits cytochrome b, cytochrome c1 and Rieske protein UQCRFS1, 2 core protein subunits UQCRC1/QCR1 and UQCRC2/QCR2, and 6 low-molecular weight protein subunits UQCRH/QCR6, UQCRB/QCR7, UQCRQ/QCR8, UQCR10/QCR9, UQCR11/QCR10 and subunit 9, the cleavage product of Rieske protein UQCRFS1. The complex exists as an obligatory dimer and forms supercomplexes (SCs) in the inner mitochondrial membrane with NADH-ubiquinone oxidoreductase (complex I, CI) and cytochrome c oxidase (complex IV, CIV), resulting in different assemblies (supercomplex SCI(1)III(2)IV(1) and megacomplex MCI(2)III(2)IV(2)).

The protein resides in the mitochondrion inner membrane. Its function is as follows. Component of the ubiquinol-cytochrome c oxidoreductase, a multisubunit transmembrane complex that is part of the mitochondrial electron transport chain which drives oxidative phosphorylation. The respiratory chain contains 3 multisubunit complexes succinate dehydrogenase (complex II, CII), ubiquinol-cytochrome c oxidoreductase (cytochrome b-c1 complex, complex III, CIII) and cytochrome c oxidase (complex IV, CIV), that cooperate to transfer electrons derived from NADH and succinate to molecular oxygen, creating an electrochemical gradient over the inner membrane that drives transmembrane transport and the ATP synthase. The cytochrome b-c1 complex catalyzes electron transfer from ubiquinol to cytochrome c, linking this redox reaction to translocation of protons across the mitochondrial inner membrane, with protons being carried across the membrane as hydrogens on the quinol. In the process called Q cycle, 2 protons are consumed from the matrix, 4 protons are released into the intermembrane space and 2 electrons are passed to cytochrome c. In Homo sapiens (Human), this protein is Cytochrome b-c1 complex subunit 7 (UQCRB).